The primary structure comprises 95 residues: Small ribosomal subunit protein uS19 (95 aa).

The protein belongs to the universal ribosomal protein uS19 family.

Functionally, protein S19 forms a complex with S13 that binds strongly to the 16S ribosomal RNA. The sequence is that of Small ribosomal subunit protein uS19 from Lactobacillus gasseri (strain ATCC 33323 / DSM 20243 / BCRC 14619 / CIP 102991 / JCM 1131 / KCTC 3163 / NCIMB 11718 / NCTC 13722 / AM63).